The following is a 648-amino-acid chain: Primary amine oxidase (648 aa).

A propeptide spanning residues 1–9 (MTLNAESEA) is cleaved from the precursor. Substrate is bound at residue 299 to 310 (AFDSGEYNIGNM). Catalysis depends on Asp301, which acts as the Proton acceptor. Cys320 and Cys346 are oxidised to a cystine. 382–387 (VANYEY) is a substrate binding site. The Schiff-base intermediate with substrate; via topaquinone role is filled by Tyr385. Position 385 is a 2',4',5'-topaquinone (Tyr385). Positions 436 and 438 each coordinate Cu cation. Mn(2+)-binding residues include Asp445, Phe446, and Asp584. His595 lines the Cu cation pocket.

It belongs to the copper/topaquinone oxidase family. As to quaternary structure, homodimer. The cofactor is Cu cation. Zn(2+) serves as cofactor. L-topaquinone is required as a cofactor. It depends on Mn(2+) as a cofactor. In terms of processing, topaquinone (TPQ) is generated by copper-dependent autoxidation of a specific tyrosyl residue.

It carries out the reaction a primary methyl amine + O2 + H2O = an aldehyde + H2O2 + NH4(+). In terms of biological role, the exact function of MaoXI is not known. The protein is Primary amine oxidase (maoI) of Arthrobacter sp. (strain P1).